The chain runs to 282 residues: Bifunctional protein FolD (282 aa).

NADP(+) is bound by residues 166 to 168 (GRS) and S191.

Belongs to the tetrahydrofolate dehydrogenase/cyclohydrolase family. Homodimer.

The enzyme catalyses (6R)-5,10-methylene-5,6,7,8-tetrahydrofolate + NADP(+) = (6R)-5,10-methenyltetrahydrofolate + NADPH. The catalysed reaction is (6R)-5,10-methenyltetrahydrofolate + H2O = (6R)-10-formyltetrahydrofolate + H(+). It participates in one-carbon metabolism; tetrahydrofolate interconversion. Its function is as follows. Catalyzes the oxidation of 5,10-methylenetetrahydrofolate to 5,10-methenyltetrahydrofolate and then the hydrolysis of 5,10-methenyltetrahydrofolate to 10-formyltetrahydrofolate. The protein is Bifunctional protein FolD of Acidovorax sp. (strain JS42).